The following is a 227-amino-acid chain: Pyridoxal 5'-phosphate synthase subunit PdxT (227 aa).

52-54 (GES) contributes to the L-glutamine binding site. Cys-84 acts as the Nucleophile in catalysis. L-glutamine contacts are provided by residues Arg-118 and 149–150 (IR). Residues His-189 and Glu-191 each act as charge relay system in the active site.

This sequence belongs to the glutaminase PdxT/SNO family. As to quaternary structure, in the presence of PdxS, forms a dodecamer of heterodimers. Only shows activity in the heterodimer.

It catalyses the reaction aldehydo-D-ribose 5-phosphate + D-glyceraldehyde 3-phosphate + L-glutamine = pyridoxal 5'-phosphate + L-glutamate + phosphate + 3 H2O + H(+). It carries out the reaction L-glutamine + H2O = L-glutamate + NH4(+). The protein operates within cofactor biosynthesis; pyridoxal 5'-phosphate biosynthesis. Its function is as follows. Catalyzes the hydrolysis of glutamine to glutamate and ammonia as part of the biosynthesis of pyridoxal 5'-phosphate. The resulting ammonia molecule is channeled to the active site of PdxS. This is Pyridoxal 5'-phosphate synthase subunit PdxT from Renibacterium salmoninarum (strain ATCC 33209 / DSM 20767 / JCM 11484 / NBRC 15589 / NCIMB 2235).